The chain runs to 604 residues: MMRAVWEALAALAAVACLVGAVRGGPGLSMFAGQAAQPDPCSDENGHPRRCIPDFVNAAFGKDVRVSSTCGRPPARYCVVSERGEERLRSCHLCNSSDPKKAHPPAFLTDLNNPHNLTCWQSENYLQFPHNVTLTLSLGKKFEVTYVSLQFCSPRPESMAIYKSMDYGRTWVPFQFYSTQCRKMYNRPHRAPITKQNEQEAVCTDSHTDMRPLSGGLIAFSTLDGRPSAHDFDNSPVLQDWVTATDIRVAFSRLHTFGDENEDDSELARDSYYYAVSDLQVGGRCKCNGHAARCVRDRDDSLVCDCRHNTAGPECDRCKPFHYDRPWQRATAREANECVACNCNLHARRCRFNMELYKLSGRKSGGVCLNCRHNTAGRHCHYCKEGFYRDMGKPITHRKACKACDCHPVGAAGKTCNQTTGQCPCKDGVTGITCNRCAKGYQQSRSPIAPCIKIPVAPPTTAASSVEEPEDCDSYCKASKGKLKMNMKKYCRKDYAVQIHILKADKAGDWWKFTVNIISVYKQGTSRIRRGDQSLWIRSRDIACKCPKIKPLKKYLLLGNAEDSPDQSGIVADKSSLVIQWRDTWARRLRKFQQREKKGKCKKA.

Positions M1–G24 are cleaved as a signal peptide. In terms of domain architecture, Laminin N-terminal spans H47–R284. 3 N-linked (GlcNAc...) asparagine glycosylation sites follow: N95, N116, and N131. 15 cysteine pairs are disulfide-bonded: C119-C152, C285-C294, C287-C304, C306-C315, C318-C338, C341-C350, C343-C368, C371-C380, C383-C401, C404-C416, C406-C423, C425-C434, C437-C451, C472-C544, and C491-C601. Laminin EGF-like domains lie at C285–A340, C341–A403, and C404–K453. N417 carries an N-linked (GlcNAc...) asparagine glycan. The NTR domain maps to C472–C601. The short motif at R530–D532 is the Cell attachment site element.

As to quaternary structure, binds to its receptors; DCC, UNC5A, UNC5B, UNC5C and probably UNC5D. Binds to its receptor; DSCAM. Interacts with APP. In terms of tissue distribution, in the embryo, widely expressed in the developing nervous system and in mesodermal tissues.

It is found in the secreted. It localises to the cytoplasm. Its function is as follows. Netrins control guidance of CNS commissural axons and peripheral motor axons. Its association with either DCC or some UNC5 receptors will lead to axon attraction or repulsion, respectively. Binding to UNC5C might cause dissociation of UNC5C from polymerized TUBB3 in microtubules and thereby lead to increased microtubule dynamics and axon repulsion. Involved in dorsal root ganglion axon projection towards the spinal cord. It also serves as a survival factor via its association with its receptors which prevent the initiation of apoptosis. Involved in colorectal tumorigenesis by regulating apoptosis. This is Netrin-1 (Ntn1) from Mus musculus (Mouse).